A 148-amino-acid polypeptide reads, in one-letter code: Transcriptional repressor NrdR (148 aa).

A zinc finger spans residues 3–32; that stretch reads CPKCSSEESKVVDSRQAEDAIRRRRVCESC. Residues 47–137 form the ATP-cone domain; the sequence is LLVIKKDDKR…VYRSFKDVSE (91 aa).

Belongs to the NrdR family. Zn(2+) is required as a cofactor.

Its function is as follows. Negatively regulates transcription of bacterial ribonucleotide reductase nrd genes and operons by binding to NrdR-boxes. The protein is Transcriptional repressor NrdR of Lactococcus lactis subsp. lactis (strain IL1403) (Streptococcus lactis).